The primary structure comprises 94 residues: Co-chaperonin GroES (94 aa).

This sequence belongs to the GroES chaperonin family. As to quaternary structure, heptamer of 7 subunits arranged in a ring. Interacts with the chaperonin GroEL.

The protein resides in the cytoplasm. Together with the chaperonin GroEL, plays an essential role in assisting protein folding. The GroEL-GroES system forms a nano-cage that allows encapsulation of the non-native substrate proteins and provides a physical environment optimized to promote and accelerate protein folding. GroES binds to the apical surface of the GroEL ring, thereby capping the opening of the GroEL channel. This Halalkalibacterium halodurans (strain ATCC BAA-125 / DSM 18197 / FERM 7344 / JCM 9153 / C-125) (Bacillus halodurans) protein is Co-chaperonin GroES.